An 815-amino-acid polypeptide reads, in one-letter code: Sodium/hydrogen exchanger 1 (815 aa).

Topologically, residues 1 to 98 (MVLRSGICGL…FPVLGIDYTH (98 aa)) are extracellular. An O-linked (GalNAc...) threonine glycan is attached at Thr42. The tract at residues 42-79 (TASTIRSSEPPRERSIGDVTTAPPEVTPESRPVNHSVT) is disordered. O-linked (GalNAc...) serine glycosylation is present at Ser56. O-linked (GalNAc...) threonine glycans are attached at residues Thr61, Thr62, and Thr68. N-linked (GlcNAc...) asparagine glycosylation occurs at Asn75. A helical membrane pass occupies residues 99-121 (VRTPFEISLWILLACLMKIGFHV). Over 122-130 (IPTISSIVP) the chain is Cytoplasmic. The helical transmembrane segment at 131-148 (ESCLLIVVGLLVGGLIKG) threads the bilayer. The Extracellular portion of the chain corresponds to 149–158 (VGETPPFLQS). A helical membrane pass occupies residues 159 to 176 (DVFFLFLLPPIILDAGYF). At 177-186 (LPLRQFTENL) the chain is on the cytoplasmic side. The chain crosses the membrane as a helical span at residues 187–215 (GTILIFAVVGTLWNAFFLGGLMYAVCLVG). The Extracellular segment spans residues 216 to 222 (GEQINNI). The helical transmembrane segment at 223 to 249 (GLLDNLLFGSIISAVDPVAVLAVFEEI) threads the bilayer. The Cytoplasmic segment spans residues 250–252 (HIN). Residues 253-283 (ELLHILVFGESLLNDAVTVVLYHLFEEFANY) traverse the membrane as a helical segment. Topologically, residues 284–287 (EHVG) are extracellular. The helical transmembrane segment at 288–322 (IVDIFLGFLSFFVVALGGVLVGVVYGVIAAFTSRF) threads the bilayer. The Cytoplasmic portion of the chain corresponds to 323–328 (TSHIRV). The helical transmembrane segment at 329–341 (IEPLFVFLYSYMA) threads the bilayer. The Extracellular segment spans residues 342–350 (YLSAELFHL). The helical transmembrane segment at 351-371 (SGIMALIASGVVMRPYVEANI) threads the bilayer. Over 372–373 (SH) the chain is Cytoplasmic. The helical transmembrane segment at 374–404 (KSHTTIKYFLKMWSSVSETLIFIFLGVSTVA) threads the bilayer. At 405–410 (GSHHWN) the chain is on the extracellular side. Residues 411–438 (WTFVISTLLFCLIARVLGVLGLTWFINK) traverse the membrane as a helical segment. Topologically, residues 439-444 (FRIVKL) are cytoplasmic. Residues 445–469 (TPKDQFIIAYGGLRGAIAFSLGYLL) form a helical membrane-spanning segment. Topologically, residues 470–475 (DKKHFP) are extracellular. A helical transmembrane segment spans residues 476–505 (MCDLFLTAIITVIFFTVFVQGMTIRPLVDL). Residues 503-545 (VDLLAVKKKQETKRSINEEIHTQFLDHLLTGIEDICGHYGHHH) are interaction with TESC. The Cytoplasmic segment spans residues 506 to 815 (LAVKKKQETK…EGEPFFPKGQ (310 aa)). The PI(4,5)P2-binding region stretch occupies residues 509 to 516 (KKKQETKR). Residues 515-545 (KRSINEEIHTQFLDHLLTGIEDICGHYGHHH) are interaction with CHP2. The interval 540–545 (HYGHHH) is confers pH-dependent PI(4,5)P2 binding. Residues 552 to 560 (RFNKKYVKK) form a PI(4,5)P2-binding region region. Residues Ser599 and Ser602 each carry the phosphoserine modification. Thr603 is modified (phosphothreonine). Phosphoserine is present on residues Ser605 and Ser648. The tract at residues 633–815 (KILRNNLQKT…EGEPFFPKGQ (183 aa)) is interaction with TESC. Residues 633 to 815 (KILRNNLQKT…EGEPFFPKGQ (183 aa)) are interaction with CALM1. Residues 684–687 (LTVP) are interaction with PPP3CA. 3 positions are modified to phosphoserine: Ser693, Ser697, and Ser703. Residues 715 to 720 (PVITID) form an interaction with PPP3CA region. Ser723, Ser726, and Ser729 each carry phosphoserine. The segment at 744–815 (LSRDPAKVAE…EGEPFFPKGQ (72 aa)) is disordered. Thr779 is subject to Phosphothreonine. The span at 782-791 (PSDSPSSQRI) shows a compositional bias: polar residues. Phosphoserine is present on residues Ser785, Ser787, and Ser796.

The protein belongs to the monovalent cation:proton antiporter 1 (CPA1) transporter (TC 2.A.36) family. Homodimer; dimerization is crucial for its function. Oligomer. Interacts with CALM1 in a calcium-dependent manner. Interacts with TESC. Interacts (via the C-terminal domain) with CHP1; the interaction occurs at the plasma membrane in a calcium-dependent manner and facilitates the maturation, cell surface expression, and function of SLC9A3. Interacts with CHP2; the interaction occurs in a calcium-dependent manner. Interacts with EZR; regulates the cytoskeletal interactions of SLC9A1 and promotes stress fiber formation. In terms of processing, O-glycosylated. Ubiquitinated, leading to its degradation by the proteasome. Ubiquitination is reduced by CHP1. Post-translationally, phosphorylation at Thr-779 increases SLC9A1 activity. Specifically dephosphorylated at Thr-779 by PPP3CA that negatively regulates SLC9A1 activity. Phosphorylation at Ser-648 by AKT1 reduces SLC9A1 binding to CALM1. In terms of processing, palmitoylated; may play a major role in SLC9A1 regulation. Kidney and intestine.

It localises to the cell membrane. Its subcellular location is the basolateral cell membrane. The catalysed reaction is Na(+)(in) + H(+)(out) = Na(+)(out) + H(+)(in). It catalyses the reaction Li(+)(out) + H(+)(in) = Li(+)(in) + H(+)(out). It carries out the reaction Li(+)(in) + Na(+)(out) = Li(+)(out) + Na(+)(in). Activated at acidic pHs. Inhibited by amiloride and 5-amino-substituted derivatives. Inhibited by cariporide and eniporide. Phosphatidylinositol 4,5-bisphosphate (PI(4,5)P2) and phosphatidylinositol 3,4,5-trisphosphate (PI(3,4,5)P3) bind and differentially regulate SLC9A1 activity. In terms of biological role, electroneutral Na(+) /H(+) antiporter that extrudes Na(+) in exchange for external protons driven by the inward sodium ion chemical gradient, protecting cells from acidification that occurs from metabolism. Exchanges intracellular H(+) ions for extracellular Na(+) in 1:1 stoichiometry. Plays a key role in maintening intracellular pH neutral and cell volume, and thus is important for cell growth, proliferation, migration and survival. In addition, can transport lithium Li(+) and also functions as a Na(+)/Li(+) antiporter. SLC9A1 also functions in membrane anchoring and organization of scaffolding complexes that coordinate signaling inputs. The protein is Sodium/hydrogen exchanger 1 of Homo sapiens (Human).